Here is a 505-residue protein sequence, read N- to C-terminus: Metalloprotease TIKI1 (505 aa).

The signal sequence occupies residues 1–19 (MSPWSWFLLQTLCLLPTGA). At 20–477 (ASRRGAPGTA…RRGHSHHSQM (458 aa)) the chain is on the extracellular side. N-linked (GlcNAc...) asparagine glycosylation is found at asparagine 220, asparagine 229, asparagine 278, and asparagine 336. Residues 389–428 (PEAVSSGHSTLPPLVSRPGSADTPSEAEQRFRKKRRRSQR) form a disordered region. Over residues 419–428 (FRKKRRRSQR) the composition is skewed to basic residues. Residues 478-498 (VASSACLSLWTPVFWVLVLAF) traverse the membrane as a helical segment. Residues 499–505 (QTETPLL) lie on the Cytoplasmic side of the membrane.

It belongs to the TIKI family. Requires Mn(2+) as cofactor. The cofactor is Co(2+).

The protein localises to the cell membrane. In terms of biological role, metalloprotease that acts as a negative regulator of the Wnt signaling pathway by mediating the cleavage of the 8 N-terminal residues of a subset of Wnt proteins. Following cleavage, Wnt proteins become oxidized and form large disulfide-bond oligomers, leading to their inactivation. Able to cleave WNT3A, WNT5, but not WNT11. Required for head formation. The sequence is that of Metalloprotease TIKI1 (TRABD2A) from Homo sapiens (Human).